Reading from the N-terminus, the 83-residue chain is Small ribosomal subunit protein uS17 (83 aa).

Belongs to the universal ribosomal protein uS17 family. In terms of assembly, part of the 30S ribosomal subunit.

One of the primary rRNA binding proteins, it binds specifically to the 5'-end of 16S ribosomal RNA. This is Small ribosomal subunit protein uS17 from Chlamydia trachomatis serovar L2 (strain ATCC VR-902B / DSM 19102 / 434/Bu).